A 710-amino-acid chain; its full sequence is Choline transporter-like protein 5 (710 aa).

The tract at residues 1 to 21 is disordered; it reads MARKRKPPSSQGDPRRYDPDF. Over 1-32 the chain is Cytoplasmic; it reads MARKRKPPSSQGDPRRYDPDFQGPTAKRTCTD. Residues 33-53 form a helical membrane-spanning segment; the sequence is VLCCLIFLLFILGYVLLGLLA. Topologically, residues 54 to 236 are extracellular; the sequence is WAHGDPRKMA…KLLEDYATSW (183 aa). Asn-82 and Asn-184 each carry an N-linked (GlcNAc...) asparagine glycan. Residues 237 to 257 traverse the membrane as a helical segment; the sequence is KWILIGLTVAMALSWTFLILL. At 258-260 the chain is on the cytoplasmic side; sequence RFT. A helical membrane pass occupies residues 261 to 281; sequence AGFLFWFFIFGVLGIIGYGIW. The Extracellular segment spans residues 282–319; the sequence is YCFLEYSSIQQRPQSTFWMYGFGIQRRVNMFFHLKETW. A helical transmembrane segment spans residues 320-340; it reads FSMMIILSAIEIIIIIVLIFL. Over 341–345 the chain is Cytoplasmic; sequence RTRIQ. The chain crosses the membrane as a helical span at residues 346–366; sequence VAIILLQEGSKAISYLPSALI. Topologically, residues 367-368 are extracellular; the sequence is YP. The helical transmembrane segment at 369–389 threads the bilayer; that stretch reads VLTFILLSICISYWAVTAVFL. The Cytoplasmic segment spans residues 390–454; the sequence is ATSGVPIFKV…NYILTFQVYN (65 aa). Residues 455–475 form a helical membrane-spanning segment; it reads LFAFLWLINFVIALGQCALAG. Topologically, residues 476-509 are extracellular; that stretch reads AFASYYWAMKKPDDIPPYPLFTAFGRAVRYHTGS. A helical transmembrane segment spans residues 510–530; it reads LAFGSLILASVQMFKVIVEYL. Topologically, residues 531-604 are cytoplasmic; that stretch reads DRRLKKAQNS…KVTVTDEVTY (74 aa). A helical membrane pass occupies residues 605 to 625; the sequence is FVLLLGKVLVSGIVGVLAFLL. Over 626–643 the chain is Extracellular; the sequence is FTERLQIIVDGPTTLNYY. Residues 644–664 form a helical membrane-spanning segment; sequence WVPFLTLVFGSYMIAHGFFSV. Over 665–710 the chain is Cytoplasmic; the sequence is YSMCVETIFICFLEDLERNEGSPSRPYFVTPALMNILLEQGKIKKQ.

The protein belongs to the CTL (choline transporter-like) family.

The protein localises to the cell membrane. It carries out the reaction choline(out) + n H(+)(in) = choline(in) + n H(+)(out). Its function is as follows. Choline/H+ antiporter. This Mus musculus (Mouse) protein is Choline transporter-like protein 5 (Slc44a5).